The following is a 178-amino-acid chain: UPF0098 protein PYRAB11530 (178 aa).

A signal peptide spans 1-22; that stretch reads MRYLVPLLVFMVLGMGCLGGGG.

The protein belongs to the UPF0098 family.

In Pyrococcus abyssi (strain GE5 / Orsay), this protein is UPF0098 protein PYRAB11530.